A 530-amino-acid chain; its full sequence is Phosphoenolpyruvate carboxykinase (ATP) (530 aa).

Residues Arg58, Tyr195, and Lys201 each contribute to the substrate site. ATP contacts are provided by residues Lys201, His220, and Gly236–Thr244. 2 residues coordinate Mn(2+): Lys201 and His220. A Mn(2+)-binding site is contributed by Asp257. ATP-binding positions include Glu285, Arg321, Arg440 to Ile441, and Thr446. Substrate is bound at residue Arg321.

It belongs to the phosphoenolpyruvate carboxykinase (ATP) family. Requires Mn(2+) as cofactor.

The protein resides in the cytoplasm. The enzyme catalyses oxaloacetate + ATP = phosphoenolpyruvate + ADP + CO2. The protein operates within carbohydrate biosynthesis; gluconeogenesis. Functionally, involved in the gluconeogenesis. Catalyzes the conversion of oxaloacetate (OAA) to phosphoenolpyruvate (PEP) through direct phosphoryl transfer between the nucleoside triphosphate and OAA. This is Phosphoenolpyruvate carboxykinase (ATP) from Staphylococcus epidermidis (strain ATCC 12228 / FDA PCI 1200).